A 258-amino-acid chain; its full sequence is Lipoprotein-releasing system ATP-binding protein LolD (258 aa).

Residues leucine 5–asparagine 244 form the ABC transporter domain. Glycine 41–serine 48 contributes to the ATP binding site. A disordered region spans residues leucine 222–valine 258. The span at serine 226–alanine 243 shows a compositional bias: polar residues. Positions lysine 247–valine 258 are enriched in basic and acidic residues.

This sequence belongs to the ABC transporter superfamily. Lipoprotein translocase (TC 3.A.1.125) family. As to quaternary structure, the complex is composed of two ATP-binding proteins (LolD) and two transmembrane proteins (LolC and LolE).

It is found in the cell inner membrane. Its function is as follows. Part of the ABC transporter complex LolCDE involved in the translocation of mature outer membrane-directed lipoproteins, from the inner membrane to the periplasmic chaperone, LolA. Responsible for the formation of the LolA-lipoprotein complex in an ATP-dependent manner. This Colwellia psychrerythraea (strain 34H / ATCC BAA-681) (Vibrio psychroerythus) protein is Lipoprotein-releasing system ATP-binding protein LolD.